Here is an 828-residue protein sequence, read N- to C-terminus: Periplasmic nitrate reductase (828 aa).

Positions 1–31 (MKLSRRSFMKANAVAAVAAAAGLSVPGVARA) form a signal peptide, tat-type signal. A 4Fe-4S Mo/W bis-MGD-type domain is found at 39-95 (IKWDKAPCRFCGTGCGVLVGTQQGRVVACQGDPDAPVNRGLNCIKGYFLPKIMYGKD). [4Fe-4S] cluster contacts are provided by Cys-46, Cys-49, Cys-53, and Cys-81. Mo-bis(molybdopterin guanine dinucleotide)-binding positions include Lys-83, Gln-150, Asn-175, Cys-179, 212–219 (WGANMAEM), 243–247 (STYQH), 262–264 (QSD), Met-372, Gln-376, Asn-482, 508–509 (SD), Lys-531, Asp-558, and 718–727 (TGRVLEHWHT). Phe-794 provides a ligand contact to substrate. Mo-bis(molybdopterin guanine dinucleotide)-binding residues include Asn-802 and Lys-819.

Belongs to the prokaryotic molybdopterin-containing oxidoreductase family. NasA/NapA/NarB subfamily. As to quaternary structure, component of the periplasmic nitrate reductase NapAB complex composed of NapA and NapB. [4Fe-4S] cluster is required as a cofactor. The cofactor is Mo-bis(molybdopterin guanine dinucleotide). In terms of processing, predicted to be exported by the Tat system. The position of the signal peptide cleavage has not been experimentally proven.

The protein localises to the periplasm. The enzyme catalyses 2 Fe(II)-[cytochrome] + nitrate + 2 H(+) = 2 Fe(III)-[cytochrome] + nitrite + H2O. In terms of biological role, catalytic subunit of the periplasmic nitrate reductase complex NapAB. Receives electrons from NapB and catalyzes the reduction of nitrate to nitrite. The sequence is that of Periplasmic nitrate reductase from Shigella boydii serotype 4 (strain Sb227).